Consider the following 72-residue polypeptide: DNA-directed RNA polymerase subunit omega (72 aa).

The protein belongs to the RNA polymerase subunit omega family. In terms of assembly, the RNAP catalytic core consists of 2 alpha, 1 beta, 1 beta' and 1 omega subunit. When a sigma factor is associated with the core the holoenzyme is formed, which can initiate transcription.

The catalysed reaction is RNA(n) + a ribonucleoside 5'-triphosphate = RNA(n+1) + diphosphate. Promotes RNA polymerase assembly. Latches the N- and C-terminal regions of the beta' subunit thereby facilitating its interaction with the beta and alpha subunits. The protein is DNA-directed RNA polymerase subunit omega of Clostridium botulinum (strain Langeland / NCTC 10281 / Type F).